The following is a 496-amino-acid chain: Galactan beta-1,4-galactosyltransferase GALS1 (496 aa).

A helical transmembrane segment spans residues Ile22–Tyr42. Positions Asp232 to Lys464 constitute a GT92 domain.

The protein belongs to the glycosyltransferase 92 family. Expressed in root vasculature, mature leaves, trichomes, flowers, siliques and seeds.

The protein localises to the golgi apparatus membrane. Involved in the biosynthesis of beta-1,4-galactan. Can transfer galactose residues from UDP-galactose to beta-1,4-galactopentaose in vitro. Forms specifically beta-1,4-galactosyl linkages and can add successive beta-1,4-galactosyl residues to the acceptor. Beta-1,4-galactans are abundant polysaccharides in plant cell walls and are found as side-chain of rhamnogalacturonan I, which is a major component of pectin. In Arabidopsis thaliana (Mouse-ear cress), this protein is Galactan beta-1,4-galactosyltransferase GALS1.